A 220-amino-acid chain; its full sequence is Guanylate kinase (220 aa).

The Guanylate kinase-like domain occupies 16 to 195 (GLMFVLSSPS…AFESVKAILR (180 aa)). 23-30 (SPSGAGKT) provides a ligand contact to ATP.

The protein belongs to the guanylate kinase family.

It is found in the cytoplasm. The catalysed reaction is GMP + ATP = GDP + ADP. In terms of biological role, essential for recycling GMP and indirectly, cGMP. This Rhodopseudomonas palustris (strain HaA2) protein is Guanylate kinase.